A 214-amino-acid polypeptide reads, in one-letter code: UPF0056 membrane protein aq_540 (214 aa).

6 helical membrane-spanning segments follow: residues 17 to 37 (FLSLLAIMNPFSSVPVVISLM), 47 to 67 (VIALKASVYAFFILTFFLISG), 73 to 93 (FMGITLPAFKVGGGILLFLIA), 122 to 142 (LIPLAMPLLAGPGSITTVLVL), 153 to 173 (VALFCAIFLSSFTAFVVYSLS), and 185 to 205 (INLITRISGILLLAISVQFVV).

Belongs to the UPF0056 (MarC) family.

Its subcellular location is the cell membrane. This chain is UPF0056 membrane protein aq_540, found in Aquifex aeolicus (strain VF5).